The sequence spans 386 residues: Antilisterial bacteriocin subtilosin biosynthesis protein AlbE (386 aa).

In terms of biological role, involved in the production of the bacteriocin subtilosin. The protein is Antilisterial bacteriocin subtilosin biosynthesis protein AlbE (albE) of Bacillus subtilis.